Reading from the N-terminus, the 663-residue chain is Oligopeptide-binding protein SarA (663 aa).

Positions 1-22 are cleaved as a signal peptide; it reads MKKGKILALAGVALLATGVLAA. A lipid anchor (N-palmitoyl cysteine) is attached at C23. Residue C23 is the site of S-diacylglycerol cysteine attachment. The interval 637–663 is disordered; sequence QKAQEKWNKERAESNKKAQEELEKHVK.

This sequence belongs to the bacterial solute-binding protein 5 family.

It is found in the cell membrane. Functionally, may be involved in the expression of cell surface properties important for colonization of the human oral cavity. It may also be involved in uptake processes. The protein is Oligopeptide-binding protein SarA (sarA) of Streptococcus gordonii (strain Challis / ATCC 35105 / BCRC 15272 / CH1 / DL1 / V288).